A 131-amino-acid chain; its full sequence is Protein Turandot M (131 aa).

A signal peptide spans 1–23; the sequence is MNPTVYLSCLVVFSLFYLGKAQA.

The protein belongs to the Turandot family.

Its subcellular location is the secreted. In terms of biological role, a humoral factor that may play a role in stress tolerance. Requires Mekk1 expression in the fat body to regulate response to septic injury and consequent immune response. The protein is Protein Turandot M of Drosophila yakuba (Fruit fly).